The sequence spans 110 residues: Minor capsid protein VP2 (110 aa).

The protein belongs to the vesivirus VP2 protein family. In terms of assembly, homooligomer. The portal-like structure consists in 12 copies of VP2. Interacts with capsid protein VP1.

It localises to the virion. Its subcellular location is the host cytoplasm. In terms of biological role, minor structural protein that forms a portal-like structure at a unique three-fold axis of symmetry, following binding to the host receptor. The channel formed by VP2 may allow the delivery of the viral genome through the host endosomal membrane. This Vesicular exanthema of swine virus serotype A48 (isolate Swine/United States/A48/1948) (VESV) protein is Minor capsid protein VP2.